A 558-amino-acid chain; its full sequence is Dihydroxy-acid dehydratase (558 aa).

C50 provides a ligand contact to [2Fe-2S] cluster. Mg(2+) is bound at residue D82. C123 lines the [2Fe-2S] cluster pocket. D124 and K125 together coordinate Mg(2+). K125 carries the post-translational modification N6-carboxylysine. C195 serves as a coordination point for [2Fe-2S] cluster. Mg(2+) is bound at residue E447. S472 acts as the Proton acceptor in catalysis.

This sequence belongs to the IlvD/Edd family. In terms of assembly, homodimer. [2Fe-2S] cluster serves as cofactor. The cofactor is Mg(2+).

The catalysed reaction is (2R)-2,3-dihydroxy-3-methylbutanoate = 3-methyl-2-oxobutanoate + H2O. It catalyses the reaction (2R,3R)-2,3-dihydroxy-3-methylpentanoate = (S)-3-methyl-2-oxopentanoate + H2O. It functions in the pathway amino-acid biosynthesis; L-isoleucine biosynthesis; L-isoleucine from 2-oxobutanoate: step 3/4. Its pathway is amino-acid biosynthesis; L-valine biosynthesis; L-valine from pyruvate: step 3/4. Functionally, functions in the biosynthesis of branched-chain amino acids. Catalyzes the dehydration of (2R,3R)-2,3-dihydroxy-3-methylpentanoate (2,3-dihydroxy-3-methylvalerate) into 2-oxo-3-methylpentanoate (2-oxo-3-methylvalerate) and of (2R)-2,3-dihydroxy-3-methylbutanoate (2,3-dihydroxyisovalerate) into 2-oxo-3-methylbutanoate (2-oxoisovalerate), the penultimate precursor to L-isoleucine and L-valine, respectively. The chain is Dihydroxy-acid dehydratase from Saccharolobus islandicus (strain Y.N.15.51 / Yellowstone #2) (Sulfolobus islandicus).